We begin with the raw amino-acid sequence, 128 residues long: Large ribosomal subunit protein bL12 (128 aa).

Belongs to the bacterial ribosomal protein bL12 family. In terms of assembly, homodimer. Part of the ribosomal stalk of the 50S ribosomal subunit. Forms a multimeric L10(L12)X complex, where L10 forms an elongated spine to which 2 to 4 L12 dimers bind in a sequential fashion. Binds GTP-bound translation factors.

In terms of biological role, forms part of the ribosomal stalk which helps the ribosome interact with GTP-bound translation factors. Is thus essential for accurate translation. In Methylobacillus flagellatus (strain ATCC 51484 / DSM 6875 / VKM B-1610 / KT), this protein is Large ribosomal subunit protein bL12.